The following is a 241-amino-acid chain: NAD(P)H-hydrate epimerase (241 aa).

Positions 11 to 221 (AASLDKDLME…SIVEKYGLNC (211 aa)) constitute a YjeF N-terminal domain. 65–69 (NNGGD) is a (6S)-NADPHX binding site. Residues Asn66 and Asp127 each coordinate K(+). Residues 131–137 (GFSFGGP) and Asp160 each bind (6S)-NADPHX. Ser163 is a K(+) binding site.

Belongs to the NnrE/AIBP family. The cofactor is K(+).

It is found in the cytoplasm. Its subcellular location is the mitochondrion. The catalysed reaction is (6R)-NADHX = (6S)-NADHX. It carries out the reaction (6R)-NADPHX = (6S)-NADPHX. In terms of biological role, catalyzes the epimerization of the S- and R-forms of NAD(P)HX, a damaged form of NAD(P)H that is a result of enzymatic or heat-dependent hydration. This is a prerequisite for the S-specific NAD(P)H-hydrate dehydratase to allow the repair of both epimers of NAD(P)HX. The protein is NAD(P)H-hydrate epimerase of Aspergillus fumigatus (strain ATCC MYA-4609 / CBS 101355 / FGSC A1100 / Af293) (Neosartorya fumigata).